The sequence spans 94 residues: Large ribosomal subunit protein eL43B (94 aa).

Residues 39–62 (CPFCGRLTVKRTAAGIWKCSGKGC) form a C4-type zinc finger.

Belongs to the eukaryotic ribosomal protein eL43 family. As to quaternary structure, component of the large ribosomal subunit (LSU). Mature yeast ribosomes consist of a small (40S) and a large (60S) subunit. The 40S small subunit contains 1 molecule of ribosomal RNA (18S rRNA) and at least 33 different proteins. The large 60S subunit contains 3 rRNA molecules (25S, 5.8S and 5S rRNA) and at least 46 different proteins.

The protein localises to the cytoplasm. In terms of biological role, component of the ribosome, a large ribonucleoprotein complex responsible for the synthesis of proteins in the cell. The small ribosomal subunit (SSU) binds messenger RNAs (mRNAs) and translates the encoded message by selecting cognate aminoacyl-transfer RNA (tRNA) molecules. The large subunit (LSU) contains the ribosomal catalytic site termed the peptidyl transferase center (PTC), which catalyzes the formation of peptide bonds, thereby polymerizing the amino acids delivered by tRNAs into a polypeptide chain. The nascent polypeptides leave the ribosome through a tunnel in the LSU and interact with protein factors that function in enzymatic processing, targeting, and the membrane insertion of nascent chains at the exit of the ribosomal tunnel. In Schizosaccharomyces pombe (strain 972 / ATCC 24843) (Fission yeast), this protein is Large ribosomal subunit protein eL43B (rpl4302).